A 732-amino-acid polypeptide reads, in one-letter code: Catalase-peroxidase (732 aa).

The disordered stretch occupies residues 1–26 (MADNKKSPETGGITMQIPGKGRTNRD). The tryptophyl-tyrosyl-methioninium (Trp-Tyr) (with M-245) cross-link spans 96–219 (WHSAGTYRTF…LAAVQMGLIY (124 aa)). The active-site Proton acceptor is His-97. A cross-link (tryptophyl-tyrosyl-methioninium (Tyr-Met) (with W-96)) is located at residues 219–245 (YVNPEGPDGNPDPVAAARDIREVFARM). His-260 provides a ligand contact to heme b. Residues 344 to 365 (KPKGEAGAGTVPDPHDPKKRHA) are disordered.

The protein belongs to the peroxidase family. Peroxidase/catalase subfamily. Homodimer or homotetramer. Requires heme b as cofactor. Post-translationally, formation of the three residue Trp-Tyr-Met cross-link is important for the catalase, but not the peroxidase activity of the enzyme.

It carries out the reaction H2O2 + AH2 = A + 2 H2O. The enzyme catalyses 2 H2O2 = O2 + 2 H2O. In terms of biological role, bifunctional enzyme with both catalase and broad-spectrum peroxidase activity. The chain is Catalase-peroxidase from Methanospirillum hungatei JF-1 (strain ATCC 27890 / DSM 864 / NBRC 100397 / JF-1).